A 220-amino-acid chain; its full sequence is 6-phosphogluconolactonase (220 aa).

This sequence belongs to the glucosamine/galactosamine-6-phosphate isomerase family. 6-phosphogluconolactonase subfamily.

It catalyses the reaction 6-phospho-D-glucono-1,5-lactone + H2O = 6-phospho-D-gluconate + H(+). It participates in carbohydrate degradation; pentose phosphate pathway; D-ribulose 5-phosphate from D-glucose 6-phosphate (oxidative stage): step 2/3. In terms of biological role, hydrolysis of 6-phosphogluconolactone to 6-phosphogluconate. This is 6-phosphogluconolactonase (pgl) from Thermotoga maritima (strain ATCC 43589 / DSM 3109 / JCM 10099 / NBRC 100826 / MSB8).